A 206-amino-acid chain; its full sequence is Adenylyl-sulfate kinase (206 aa).

Residue 31–38 (GLSASGKS) participates in ATP binding. Residue Ser105 is the Phosphoserine intermediate of the active site.

The protein belongs to the APS kinase family.

The enzyme catalyses adenosine 5'-phosphosulfate + ATP = 3'-phosphoadenylyl sulfate + ADP + H(+). The protein operates within sulfur metabolism; hydrogen sulfide biosynthesis; sulfite from sulfate: step 2/3. In terms of biological role, catalyzes the synthesis of activated sulfate. The sequence is that of Adenylyl-sulfate kinase (sD) from Emericella nidulans (strain FGSC A4 / ATCC 38163 / CBS 112.46 / NRRL 194 / M139) (Aspergillus nidulans).